A 253-amino-acid polypeptide reads, in one-letter code: Ribosome-inactivating protein saporin-9 (253 aa).

Residue Glu176 is part of the active site.

It carries out the reaction Endohydrolysis of the N-glycosidic bond at one specific adenosine on the 28S rRNA.. Ribosome-inactivating protein of type 1, inhibits protein synthesis in animal cells. The sequence is that of Ribosome-inactivating protein saporin-9 (SAP9) from Saponaria officinalis (Common soapwort).